Reading from the N-terminus, the 241-residue chain is Pyridoxine/pyridoxamine 5'-phosphate oxidase (241 aa).

Residues 1–35 (MASNPPSAASPRRTAVSPGADRPDGPDPAGQRQSY) form a disordered region. Substrate contacts are provided by residues 32-35 (RQSY) and K92. FMN is bound by residues 87–92 (RTVLLK), 102–103 (YT), R108, K109, and Q131. Substrate contacts are provided by Y149, R153, and S157. Residues 166–167 (QS) and W212 each bind FMN. Substrate is bound at residue 218–220 (RLH). Position 222 (R222) interacts with FMN.

This sequence belongs to the pyridoxamine 5'-phosphate oxidase family. As to quaternary structure, homodimer. It depends on FMN as a cofactor.

The catalysed reaction is pyridoxamine 5'-phosphate + O2 + H2O = pyridoxal 5'-phosphate + H2O2 + NH4(+). It carries out the reaction pyridoxine 5'-phosphate + O2 = pyridoxal 5'-phosphate + H2O2. Its pathway is cofactor metabolism; pyridoxal 5'-phosphate salvage; pyridoxal 5'-phosphate from pyridoxamine 5'-phosphate: step 1/1. The protein operates within cofactor metabolism; pyridoxal 5'-phosphate salvage; pyridoxal 5'-phosphate from pyridoxine 5'-phosphate: step 1/1. Catalyzes the oxidation of either pyridoxine 5'-phosphate (PNP) or pyridoxamine 5'-phosphate (PMP) into pyridoxal 5'-phosphate (PLP). This chain is Pyridoxine/pyridoxamine 5'-phosphate oxidase, found in Frankia alni (strain DSM 45986 / CECT 9034 / ACN14a).